A 520-amino-acid polypeptide reads, in one-letter code: Probable cytochrome P450 6v1 (520 aa).

A heme-binding site is contributed by Cys-465.

This sequence belongs to the cytochrome P450 family. The cofactor is heme.

It localises to the endoplasmic reticulum membrane. The protein resides in the microsome membrane. In terms of biological role, may be involved in the metabolism of insect hormones and in the breakdown of synthetic insecticides. In Drosophila melanogaster (Fruit fly), this protein is Probable cytochrome P450 6v1 (Cyp6v1).